We begin with the raw amino-acid sequence, 243 residues long: Putative outer membrane protein RP075 (243 aa).

The first 23 residues, 1–23 (MLRIVKKLWVILFISNISINSFA), serve as a signal peptide directing secretion.

It belongs to the OmpW/AlkL family.

Its subcellular location is the cell outer membrane. The chain is Putative outer membrane protein RP075 from Rickettsia prowazekii (strain Madrid E).